An 839-amino-acid chain; its full sequence is Homeobox-leucine zipper protein HOX10 (839 aa).

Disordered regions lie at residues 1-24 (MAAAVAMRGSSSDGGGYDKVSGMD) and 132-157 (QNTPLANDTSCESNVTTPQNPLRDAS). The homeobox DNA-binding region spans 24–87 (DSGKYVRYTP…NRRCRDKQRK (64 aa)). A coiled-coil region spans residues 91 to 134 (RLQAVNRKLTAMNKLLMEENERLQKQVSQLVHENAHMRQQLQNT). The region spanning 155–383 (DASNPSGLLS…IAQETSGEVV (229 aa)) is the START domain.

It belongs to the HD-ZIP homeobox family. Class III subfamily. In terms of tissue distribution, expressed in stems, leaf sheaths and blades and panicles.

It is found in the nucleus. In terms of biological role, probable transcription factor. In Oryza sativa subsp. indica (Rice), this protein is Homeobox-leucine zipper protein HOX10 (HOX10).